A 540-amino-acid polypeptide reads, in one-letter code: 2,3-bisphosphoglycerate-independent phosphoglycerate mutase (540 aa).

Positions 25 and 75 each coordinate Mn(2+). The Phosphoserine intermediate role is filled by Ser75. Substrate is bound by residues His136, 166 to 167, Arg198, Arg204, 269 to 272, and Lys342; these read RD and RPDR. Positions 409, 413, 450, 451, and 468 each coordinate Mn(2+).

It belongs to the BPG-independent phosphoglycerate mutase family. In terms of assembly, monomer. Mn(2+) is required as a cofactor.

It catalyses the reaction (2R)-2-phosphoglycerate = (2R)-3-phosphoglycerate. The protein operates within carbohydrate degradation; glycolysis; pyruvate from D-glyceraldehyde 3-phosphate: step 3/5. Catalyzes the interconversion of 2-phosphoglycerate and 3-phosphoglycerate. This is 2,3-bisphosphoglycerate-independent phosphoglycerate mutase from Prochlorococcus marinus subsp. pastoris (strain CCMP1986 / NIES-2087 / MED4).